Consider the following 132-residue polypeptide: uncharacterized protein (132 aa).

Residues 10 to 30 traverse the membrane as a helical segment; sequence LVLFFTIILIALCPFVYYLWD. Residues 50–79 are a coiled coil; it reads KNCSTEIEHAIEEHKRKNKEKKEAKEKRLA.

The protein localises to the membrane. This is an uncharacterized protein from Invertebrate iridescent virus 6 (IIV-6).